A 177-amino-acid chain; its full sequence is Large ribosomal subunit protein uL6 (177 aa).

This sequence belongs to the universal ribosomal protein uL6 family. Part of the 50S ribosomal subunit.

In terms of biological role, this protein binds to the 23S rRNA, and is important in its secondary structure. It is located near the subunit interface in the base of the L7/L12 stalk, and near the tRNA binding site of the peptidyltransferase center. The sequence is that of Large ribosomal subunit protein uL6 from Cereibacter sphaeroides (strain ATCC 17029 / ATH 2.4.9) (Rhodobacter sphaeroides).